Reading from the N-terminus, the 251-residue chain is MNLNSIPAFDDNYIWVLNDEAGRCLIVDPGDAEPVLNAISANNWQPEAIFLTHHHHDHVGGVKELVEKFPQIVVYGPQETQDKGTTQVVKDGETAFVLGHEFSVIATPGHTLGHICYFSKPYLFCGDTLFSGGCGRLFEGTPSQMYQSIKKLSALPDDTLVCCAHEYTLSNMKFALSILPHDLSINDYYRKVKELRAKNQITLPVILKNERQINVFLRTEDIDLINVINEETLLKQPEERFAWLRSKKDRF.

7 residues coordinate Zn(2+): histidine 53, histidine 55, aspartate 57, histidine 58, histidine 110, aspartate 127, and histidine 165.

The protein belongs to the metallo-beta-lactamase superfamily. Glyoxalase II family. In terms of assembly, monomer. Zn(2+) is required as a cofactor.

The enzyme catalyses an S-(2-hydroxyacyl)glutathione + H2O = a 2-hydroxy carboxylate + glutathione + H(+). Its pathway is secondary metabolite metabolism; methylglyoxal degradation; (R)-lactate from methylglyoxal: step 2/2. Its function is as follows. Thiolesterase that catalyzes the hydrolysis of S-D-lactoyl-glutathione to form glutathione and D-lactic acid. This Escherichia coli (strain UTI89 / UPEC) protein is Hydroxyacylglutathione hydrolase.